Consider the following 88-residue polypeptide: Large ribosomal subunit protein eL37 (88 aa).

Residues cysteine 17, cysteine 20, cysteine 32, and cysteine 35 each coordinate Zn(2+). A C4-type zinc finger spans residues 17 to 35; sequence CNRCGRRSFHVQKKTCSSC.

This sequence belongs to the eukaryotic ribosomal protein eL37 family. Requires Zn(2+) as cofactor.

Its function is as follows. Binds to the 23S rRNA. This is Large ribosomal subunit protein eL37 (RPL37) from Candida albicans (Yeast).